The primary structure comprises 174 residues: Gamma-crystallin D (174 aa).

2 consecutive Beta/gamma crystallin 'Greek key' domains span residues 2-40 (GKITFYEDRGFQGRHYECSTDHSNLQPYFSRCNSVRVDS) and 41-83 (GCWM…RLIP). A connecting peptide region spans residues 84–87 (HAGS). 2 consecutive Beta/gamma crystallin 'Greek key' domains span residues 88-128 (HRIR…NVLE) and 129-171 (GCWV…RRVM).

It belongs to the beta/gamma-crystallin family. Detected in the superior olivary complex and fibers of the ventral aoustic stria of the auditory hindbrain.

Its function is as follows. Crystallins are the dominant structural components of the vertebrate eye lens. The sequence is that of Gamma-crystallin D (Crygd) from Rattus norvegicus (Rat).